Here is a 632-residue protein sequence, read N- to C-terminus: Golgin subfamily A member 8O (632 aa).

The interval 1–76 (MAEETQHNKL…TSSATLKDLE (76 aa)) is disordered. Residues 38–50 (TNGSIPETATSGG) are compositionally biased toward polar residues. 2 coiled-coil regions span residues 85 to 150 (VLDS…TDLY) and 209 to 421 (ELEQ…SLMA). 3 disordered regions span residues 423–452 (PGEGHGGEHLDSEGEEAPRPMPSVPEDPES), 505–524 (DAALGGGHHQAGAQGGDEGE), and 552–612 (NSAD…EHPG). A compositionally biased stretch (basic and acidic residues) spans 427 to 440 (HGGEHLDSEGEEAP). A compositionally biased stretch (gly residues) spans 508–520 (LGGGHHQAGAQGG). Residues 569–578 (AADKHGDLRE) are compositionally biased toward basic and acidic residues.

The protein belongs to the GOLGA6 family.

The polypeptide is Golgin subfamily A member 8O (GOLGA8O) (Homo sapiens (Human)).